The sequence spans 200 residues: Holliday junction branch migration complex subunit RuvA (200 aa).

The segment at 1-64 is domain I; it reads MIGRIVGTLI…EDSHTLYGFI (64 aa). The segment at 65–143 is domain II; that stretch reads DKNERALFRV…QAAKTDLFSA (79 aa). The flexible linker stretch occupies residues 144-149; the sequence is PAVLRQ. The domain III stretch occupies residues 150 to 200; the sequence is VQADPRQEAEAALISLGYKPQEAAKAIAGVPVDAANSEDVIKAALKGMLRK.

The protein belongs to the RuvA family. In terms of assembly, homotetramer. Forms an RuvA(8)-RuvB(12)-Holliday junction (HJ) complex. HJ DNA is sandwiched between 2 RuvA tetramers; dsDNA enters through RuvA and exits via RuvB. An RuvB hexamer assembles on each DNA strand where it exits the tetramer. Each RuvB hexamer is contacted by two RuvA subunits (via domain III) on 2 adjacent RuvB subunits; this complex drives branch migration. In the full resolvosome a probable DNA-RuvA(4)-RuvB(12)-RuvC(2) complex forms which resolves the HJ.

The protein resides in the cytoplasm. In terms of biological role, the RuvA-RuvB-RuvC complex processes Holliday junction (HJ) DNA during genetic recombination and DNA repair, while the RuvA-RuvB complex plays an important role in the rescue of blocked DNA replication forks via replication fork reversal (RFR). RuvA specifically binds to HJ cruciform DNA, conferring on it an open structure. The RuvB hexamer acts as an ATP-dependent pump, pulling dsDNA into and through the RuvAB complex. HJ branch migration allows RuvC to scan DNA until it finds its consensus sequence, where it cleaves and resolves the cruciform DNA. This chain is Holliday junction branch migration complex subunit RuvA, found in Marinomonas sp. (strain MWYL1).